We begin with the raw amino-acid sequence, 69 residues long: uncharacterized protein (69 aa).

A helical transmembrane segment spans residues 13–35 (IRSINPTLLNFINYFLLIVPQFI).

Its subcellular location is the membrane. This is an uncharacterized protein from Saccharomyces cerevisiae (strain ATCC 204508 / S288c) (Baker's yeast).